The sequence spans 970 residues: Sodium/calcium exchanger 1 (970 aa).

An N-terminal signal peptide occupies residues 1–32; the sequence is MLRLSLPPNVSMGFRLVALVALLFSHVDHITA. The Extracellular segment spans residues 33–71; it reads DTEAETGGNETTECTGSYYCKKGVILPIWEPQDPSFGDK. The N-linked (GlcNAc...) asparagine glycan is linked to Asn41. Residues 72–92 form a helical membrane-spanning segment; it reads IARATVYFVAMVYMFLGVSII. Residues 93-133 lie on the Cytoplasmic side of the membrane; sequence ADRFMSSIEVITSQEKEITIKKPNGETTKTTVRIWNETVSN. Residues 134–154 traverse the membrane as a helical segment; sequence LTLMALGSSAPEILLSVIEVC. The Alpha-1 repeat unit spans residues 138–178; the sequence is ALGSSAPEILLSVIEVCGHNFTAGDLGPSTIVGSAAFNMFI. Over 155–167 the chain is Extracellular; the sequence is GHNFTAGDLGPST. Residue Asn157 is glycosylated (N-linked (GlcNAc...) asparagine). The chain crosses the membrane as a helical span at residues 168-188; the sequence is IVGSAAFNMFIIIALCVYVVP. Topologically, residues 189 to 201 are cytoplasmic; that stretch reads DGETRKIKHLRVF. The chain crosses the membrane as a helical span at residues 202-222; that stretch reads FVTAAWSIFAYTWLYIILSVS. At 223–228 the chain is on the extracellular side; it reads SPGVVE. The helical transmembrane segment at 229–249 threads the bilayer; that stretch reads VWEGLLTFFFFPICVVFAWVA. Residues 250 to 797 are Cytoplasmic-facing; that stretch reads DRRLLFYKYV…FVPPTEYWNG (548 aa). A putative calmodulin-binding region region spans residues 251-270; the sequence is RRLLFYKYVYKRYRAGKQRG. Residues Ser282 and Ser389 each carry the phosphoserine modification. 2 Calx-beta domains span residues 393–493 and 524–624; these read VNME…VHLS and ATIT…IEIG. The Ca(2+) site is built by Glu417, Asp453, Asp478, Asp479, Ile481, Glu483, Glu486, Asp530, Asp531, Asp532, Glu548, Asp584, Asp610, Glu611, Glu612, and Glu715. A helical membrane pass occupies residues 798–818; that stretch reads WACFIVSILMIGLLTAFIGDL. Residues 819 to 821 are Extracellular-facing; it reads ASH. A helical transmembrane segment spans residues 822-842; that stretch reads FGCTIGLKDSVTAVVFVALGT. Residues 839 to 875 form an Alpha-2 repeat; sequence ALGTSVPDTFASKVAATQDQYADASIGNVTGSNAVNV. Topologically, residues 843-871 are cytoplasmic; it reads SVPDTFASKVAATQDQYADASIGNVTGSN. A helical transmembrane segment spans residues 872–892; that stretch reads AVNVFLGIGVAWSIAAIYHAA. At 893 to 903 the chain is on the extracellular side; it reads NGEQFKVSPGT. A helical transmembrane segment spans residues 904–924; the sequence is LAFSVTLFTIFAFINVGVLLY. The Cytoplasmic segment spans residues 925–941; it reads RRRPEIGGELGGPRTAK. A helical membrane pass occupies residues 942-962; sequence LLTSSLFVLLWLLYIFFSSLE. At 963-970 the chain is on the extracellular side; that stretch reads AYCHIKGF.

Belongs to the Ca(2+):cation antiporter (CaCA) (TC 2.A.19) family. SLC8 subfamily. Detected in heart, kidney and brain (at protein level).

The protein resides in the cell membrane. It catalyses the reaction Ca(2+)(in) + 3 Na(+)(out) = Ca(2+)(out) + 3 Na(+)(in). Activated by micromolar levels of Ca(2+). Functionally, mediates the exchange of one Ca(2+) ion against three to four Na(+) ions across the cell membrane, and thereby contributes to the regulation of cytoplasmic Ca(2+) levels and Ca(2+)-dependent cellular processes. Contributes to Ca(2+) transport during excitation-contraction coupling in muscle. In a first phase, voltage-gated channels mediate the rapid increase of cytoplasmic Ca(2+) levels due to release of Ca(2+) stores from the endoplasmic reticulum. SLC8A1 mediates the export of Ca(2+) from the cell during the next phase, so that cytoplasmic Ca(2+) levels rapidly return to baseline. Required for normal embryonic heart development and the onset of heart contractions. This chain is Sodium/calcium exchanger 1 (Slc8a1), found in Mus musculus (Mouse).